Reading from the N-terminus, the 495-residue chain is Maturase K (495 aa).

It belongs to the intron maturase 2 family. MatK subfamily.

The protein resides in the plastid. It is found in the chloroplast. Functionally, usually encoded in the trnK tRNA gene intron. Probably assists in splicing its own and other chloroplast group II introns. The protein is Maturase K of Torreya californica (California nutmeg).